A 420-amino-acid chain; its full sequence is Calreticulin (420 aa).

Positions 1–25 are cleaved as a signal peptide; that stretch reads MAIRKGSSYAVAALLALASVAAVAG. Residue asparagine 57 is glycosylated (N-linked (GlcNAc...) asparagine). Positions 115, 117, 134, and 141 each coordinate an alpha-D-glucoside. Repeat copies occupy residues 197–208, 216–227, 233–244, 251–262, 266–276, 280–290, and 294–304. The segment at 197 to 262 is 4 X approximate repeats; it reads KHTGSIYEHW…DAKKPEDWDD (66 aa). The segment covering 213 to 258 has biased composition (basic and acidic residues); it reads KIKDPEAKKPEDWDDKEYIPDPEDKKPEGYDDIPKEIPDPDAKKPE. The segment at 213–285 is disordered; the sequence is KIKDPEAKKP…PEYKGPWKQK (73 aa). The tract at residues 266–304 is 3 X approximate repeats; the sequence is GEWTAPTIPNPEYKGPWKQKKIKNPNYQGKWKAPMIDNP. Glutamate 324 provides a ligand contact to an alpha-D-glucoside. Residues 355–381 show a composition bias toward basic and acidic residues; it reads GKHKEAEKAAFDEAEKKKEEEDAAKGG. The interval 355 to 420 is disordered; it reads GKHKEAEKAA…DSDDEKHDEL (66 aa). Residues 382–402 show a composition bias toward acidic residues; it reads DDEDDDLEDEEDDEKADEDKA. Over residues 403-420 the composition is skewed to basic and acidic residues; the sequence is DSDAEDGKDSDDEKHDEL. The Prevents secretion from ER motif lies at 417–420; that stretch reads HDEL.

The protein belongs to the calreticulin family.

Its subcellular location is the endoplasmic reticulum lumen. Its function is as follows. Molecular calcium-binding chaperone promoting folding, oligomeric assembly and quality control in the ER via the calreticulin/calnexin cycle. This lectin may interact transiently with almost all of the monoglucosylated glycoproteins that are synthesized in the ER. This Zea mays (Maize) protein is Calreticulin (CRT).